The primary structure comprises 191 residues: Peptidyl-tRNA hydrolase (191 aa).

Tyr16 is a binding site for tRNA. Residue His21 is the Proton acceptor of the active site. TRNA is bound by residues Phe66, Asn68, and Asn114.

It belongs to the PTH family. Monomer.

It is found in the cytoplasm. The enzyme catalyses an N-acyl-L-alpha-aminoacyl-tRNA + H2O = an N-acyl-L-amino acid + a tRNA + H(+). Functionally, hydrolyzes ribosome-free peptidyl-tRNAs (with 1 or more amino acids incorporated), which drop off the ribosome during protein synthesis, or as a result of ribosome stalling. In terms of biological role, catalyzes the release of premature peptidyl moieties from peptidyl-tRNA molecules trapped in stalled 50S ribosomal subunits, and thus maintains levels of free tRNAs and 50S ribosomes. In Geotalea uraniireducens (strain Rf4) (Geobacter uraniireducens), this protein is Peptidyl-tRNA hydrolase.